The primary structure comprises 733 residues: MEGPGLEFTEAIIDNGKLGKHVVRFEAGLLAQQADGSAAVYLDGDTMLLSATTAAKTPRDSIDFFPLTVDVEERMYAAGRIPGSFFRREGRPSEGAILACRLIDRPLRPSFVKGLRNEVQVVVTVMALNPAVYYDVVAINAASMSTQLAGLPFSGPIGGVRMALIDDQWVCFPSVDQRKESTFDMVVAGRVLADGDVAIMMVEAESTPATWGLVRGGRTAPTEEVVATGLEAAKPFIKVLCDAQVALAAKLPKETYDFPVFKDYEDDVYAAVEEKAADELSRIEQIAAKLERQEAESELKARIKAELAETFPEREAEISGAFKAVMKKIVRKRVLDEGVRIDGRGPRDIRSLSAEVGIIPRVHGSALFQRGETQILGVSTLNMLDMEQKLDTLSPENTRRYMHNYNMPPYSTGETGRVGSPKRREIGHGNLAERALIPVLPTREEFPYAIREVSEAIGSNGSTSMGSVCASTLALLNAGVPLRASVAGIAMGLMSETDEDGKTKYLALTDILGAEDALGDMDFKVAGTSEFVTALQLDTKLDGIPADVLAGALKQAKEARTAILEVMNEAIDSPDEMAPTAPRIITVHIPVDKIGEVIGPKGKMINQIQDDTGANISIEDDGTIFIGADNGDSAESARSMINAIANPQMPEVGERYLGTVVKTTSFGAFVSLLPGKDGLLHISKMRDLNDGKRVEAVEDVLSVGQKIQVEIAEVDDRGKLSLVLASDEDDADE.

The interval 404-424 is disordered; that stretch reads NYNMPPYSTGETGRVGSPKRR. Mg(2+) contacts are provided by Asp-516 and Asp-522. The region spanning 582–641 is the KH domain; sequence PRIITVHIPVDKIGEVIGPKGKMINQIQDDTGANISIEDDGTIFIGADNGDSAESARSMI. An S1 motif domain is found at 653–725; sequence GERYLGTVVK…DRGKLSLVLA (73 aa).

The protein belongs to the polyribonucleotide nucleotidyltransferase family. It depends on Mg(2+) as a cofactor.

The protein resides in the cytoplasm. The catalysed reaction is RNA(n+1) + phosphate = RNA(n) + a ribonucleoside 5'-diphosphate. Functionally, involved in mRNA degradation. Catalyzes the phosphorolysis of single-stranded polyribonucleotides processively in the 3'- to 5'-direction. The protein is Polyribonucleotide nucleotidyltransferase of Cutibacterium acnes (strain DSM 16379 / KPA171202) (Propionibacterium acnes).